The sequence spans 283 residues: Probable endonuclease 4 (283 aa).

Zn(2+) contacts are provided by His69, His109, Glu145, Asp179, His182, His216, Asp229, His231, and Glu261.

The protein belongs to the AP endonuclease 2 family. Zn(2+) is required as a cofactor.

The catalysed reaction is Endonucleolytic cleavage to 5'-phosphooligonucleotide end-products.. In terms of biological role, endonuclease IV plays a role in DNA repair. It cleaves phosphodiester bonds at apurinic or apyrimidinic (AP) sites, generating a 3'-hydroxyl group and a 5'-terminal sugar phosphate. The sequence is that of Probable endonuclease 4 from Desulfosudis oleivorans (strain DSM 6200 / JCM 39069 / Hxd3) (Desulfococcus oleovorans).